The chain runs to 79 residues: Transcriptional regulator SplA (79 aa).

In terms of biological role, regulator of the spore photoproduct lyase operon (splAB). The sequence is that of Transcriptional regulator SplA (splA) from Bacillus subtilis (strain 168).